We begin with the raw amino-acid sequence, 284 residues long: Expansin-A17 (284 aa).

A signal peptide spans 1–21; that stretch reads MASSWNNPAIFLAAALAVATA. Positions 71 to 185 constitute an Expansin-like EG45 domain; that stretch reads GGACGYVSND…RRVPCQRTGG (115 aa). An Expansin-like CBD domain is found at 195–279; the sequence is YWLLLYVMNV…WWITGLCYQG (85 aa).

Belongs to the expansin family. Expansin A subfamily. In terms of tissue distribution, expressed in roots.

The protein resides in the secreted. It localises to the cell wall. The protein localises to the membrane. Its function is as follows. May cause loosening and extension of plant cell walls by disrupting non-covalent bonding between cellulose microfibrils and matrix glucans. No enzymatic activity has been found. May be required for rapid internodal elongation in deepwater rice during submergence. This is Expansin-A17 (EXPA17) from Oryza sativa subsp. japonica (Rice).